Consider the following 112-residue polypeptide: UPF0102 protein CFF8240_0294 (112 aa).

It belongs to the UPF0102 family.

The polypeptide is UPF0102 protein CFF8240_0294 (Campylobacter fetus subsp. fetus (strain 82-40)).